A 263-amino-acid chain; its full sequence is tRNA pseudouridine synthase A (263 aa).

Catalysis depends on Asp-51, which acts as the Nucleophile. Position 109 (Tyr-109) interacts with substrate.

The protein belongs to the tRNA pseudouridine synthase TruA family. Homodimer.

It catalyses the reaction uridine(38/39/40) in tRNA = pseudouridine(38/39/40) in tRNA. Formation of pseudouridine at positions 38, 39 and 40 in the anticodon stem and loop of transfer RNAs. The chain is tRNA pseudouridine synthase A from Pseudoalteromonas atlantica (strain T6c / ATCC BAA-1087).